The sequence spans 504 residues: Putative glycerol-3-phosphate transporter 2 (504 aa).

The next 12 membrane-spanning stretches (helical) occupy residues Leu-31–Phe-51, Ala-84–Ala-104, Phe-116–Trp-136, Phe-145–Ala-165, Met-178–Ala-198, Phe-210–Val-230, Ile-280–Tyr-302, Gly-324–Ile-344, Ala-352–Phe-372, Thr-378–Ile-398, Ala-424–Ile-444, and Val-452–Ile-472.

This sequence belongs to the major facilitator superfamily. Organophosphate:Pi antiporter (OPA) (TC 2.A.1.4) family. Expressed in the root-hair differentiation zone.

The protein localises to the membrane. The sequence is that of Putative glycerol-3-phosphate transporter 2 from Arabidopsis thaliana (Mouse-ear cress).